The primary structure comprises 618 residues: Sodium/iodide cotransporter (618 aa).

At 1 to 14 (MEGAEAGARATFGA) the chain is on the extracellular side. Residues 15–31 (WDYGVFATMLLVSTGIG) form a helical membrane-spanning segment. Topologically, residues 32–56 (LWVGLARGGQRSADDFFTGGRQLAA) are cytoplasmic. Residues 57–80 (VPVGLSLAASFMSAVQVLGVPAEA) traverse the membrane as a discontinuously helical segment. Na(+) is bound by residues S69, V71, and Q72. V76 provides a ligand contact to iodide. Residues 81-84 (ARYG) are Extracellular-facing. A helical transmembrane segment spans residues 85 to 105 (LKFLWMCAGQLLNSLLTAFLF). An iodide-binding site is contributed by M90. At 106 to 130 (LPIFYRLGLTSTYQYLELRFSRAVR) the chain is on the cytoplasmic side. The helical transmembrane segment at 131 to 157 (LCGTLQYLVATMLYTGIVIYAPALILN) threads the bilayer. Y144 contributes to the Na(+) binding site. At 158 to 163 (QVTGLD) the chain is on the extracellular side. A helical membrane pass occupies residues 164–181 (IWASLLSTGIICTLYTTV). Over 182–189 (GGMKAVVW) the chain is Cytoplasmic. A helical transmembrane segment spans residues 190–208 (TDVFQVVVMLVGFWVILAR). The Extracellular portion of the chain corresponds to 209–243 (GVILLGGPRNVLSLAQNHSRINLMDFDPDPRSRYT). A discontinuously helical membrane pass occupies residues 244–266 (FWTFIVGGTLVWLSMYGVNQAQV). W255 is a binding site for iodide. Residue M258 participates in Na(+) binding. Residues 267–278 (QRYVACHTEGKA) lie on the Cytoplasmic side of the membrane. The helical transmembrane segment at 279-301 (KLALLVNQLGLFLIVASAACCGI) threads the bilayer. The Extracellular portion of the chain corresponds to 302–335 (VMFVYYKDCDPLLTGRISAPDQYMPLLVLDIFED). A helical transmembrane segment spans residues 336 to 363 (LPGVPGLFLACAYSGTLSTASTSINAMA). Residues 364–386 (AVTVEDLIKPRMPGLAPRKLVFI) are Cytoplasmic-facing. A helical membrane pass occupies residues 387 to 408 (SKGLSFIYGSACLTVAALSSLL). The Extracellular portion of the chain corresponds to 409–411 (GGG). A helical transmembrane segment spans residues 412–437 (VLQGSFTVMGVISGPLLGAFTLGMLL). An iodide-binding site is contributed by L413. Positions 416 and 417 each coordinate Na(+). Residue F417 coordinates iodide. Residues 438–441 (PACN) are Cytoplasmic-facing. A helical transmembrane segment spans residues 442–465 (TPGVLSGLAAGLAVSLWVAVGATL). Residues 466-520 (YPPGEQTMGVLPTSAAGCTNDSVLLGPPGATNASNGIPSSGMDTGRPALADTFYA) lie on the Extracellular side of the membrane. N-linked (GlcNAc...) asparagine glycosylation is found at N485 and N497. Residues 521-545 (ISYLYYGALGTLTTMLCGALISYLT) traverse the membrane as a helical segment. At 546–618 (GPTKRSSLGP…YLGHDVETNL (73 aa)) the chain is on the cytoplasmic side. S551 carries the phosphoserine; by PKA modification. Residues 587–618 (EDIPAVTKKPPGLKPGAETHPLYLGHDVETNL) are disordered.

Belongs to the sodium:solute symporter (SSF) (TC 2.A.21) family. As to quaternary structure, monomer.

It localises to the cell membrane. The protein localises to the cytoplasm. It catalyses the reaction iodide(out) + 2 Na(+)(out) = iodide(in) + 2 Na(+)(in). The enzyme catalyses chlorate(out) + 2 Na(+)(out) = chlorate(in) + 2 Na(+)(in). The catalysed reaction is thiocyanate(out) + 2 Na(+)(out) = thiocyanate(in) + 2 Na(+)(in). It carries out the reaction nitrate(out) + 2 Na(+)(out) = nitrate(in) + 2 Na(+)(in). It catalyses the reaction selenocyanate(out) + 2 Na(+)(out) = selenocyanate(in) + 2 Na(+)(in). With respect to regulation, perchlorate inhibits iodide transport activity. Oxyanions inhibit iodide transport activity by blocking the binding sites for iodide and one of the sodium ions. Its function is as follows. Sodium:iodide symporter that mediates the transport of iodide into the thyroid gland. Can also mediate the transport of chlorate, thiocynate, nitrate and selenocynate. The protein is Sodium/iodide cotransporter (Slc5a5) of Rattus norvegicus (Rat).